Here is a 250-residue protein sequence, read N- to C-terminus: UPF0259 membrane protein Spro_2675 (250 aa).

6 helical membrane-spanning segments follow: residues 23–43 (ILML…AFSP), 87–107 (AATF…LTLI), 132–152 (LLLL…LFVV), 156–176 (IMAI…KGVF), 192–212 (VIVP…FMVS), and 222–242 (ASVV…IYLF).

Belongs to the UPF0259 family.

Its subcellular location is the cell inner membrane. The chain is UPF0259 membrane protein Spro_2675 from Serratia proteamaculans (strain 568).